Here is a 472-residue protein sequence, read N- to C-terminus: Interferon-induced protein with tetratricopeptide repeats 2 (472 aa).

Position 2 is an N-acetylserine (serine 2). TPR repeat units follow at residues 51-89, 90-135, 136-171, 172-208, 247-280, 281-335, 336-366, 367-405, and 406-448; these read ATMC…ADQA, EIRS…RIES, PELD…KPKN, PEFT…NPDN, TDVL…IPNN, AYLH…NLFR, VCSI…KELT, PVAK…NQKS, and REKE…KMQQ. Positions 446 to 472 are disordered; sequence MQQADEDSERGLESGSLIPSASSWNGE. A compositionally biased stretch (polar residues) spans 462–472; it reads LIPSASSWNGE.

Belongs to the IFIT family. As to quaternary structure, domain-swapped homodimer. Component of an interferon-dependent multiprotein complex, at least composed of IFIT1, IFIT2 and IFIT3. Interacts with IFIT1 and IFIT3. Interacts with STING1/MITA and disrupts its interaction with MAVS or TBK1. Interacts with EIF3E and EIF3C.

It is found in the cytoplasm. The protein localises to the endoplasmic reticulum. In terms of biological role, IFN-induced antiviral protein which inhibits expression of viral messenger RNAs lacking 2'-O-methylation of the 5' cap. The ribose 2'-O-methylation would provide a molecular signature to distinguish between self and non-self mRNAs by the host during viral infection. Viruses evolved several ways to evade this restriction system such as encoding their own 2'-O-methylase for their mRNAs or by stealing host cap containing the 2'-O-methylation (cap snatching mechanism). Binds AU-rich viral RNAs, with or without 5' triphosphorylation, RNA-binding is required for antiviral activity. Can promote apoptosis. This is Interferon-induced protein with tetratricopeptide repeats 2 (IFIT2) from Homo sapiens (Human).